The following is a 344-amino-acid chain: MEARLKELKQKALELIEEAKELKGLNDVRVAYLGKKGPITEVLRGMGKLSAEERPRMGALVNEVREAIQTRLEDKIGNLEKAVIEAKLATETIDVTLPGRPVETGCHHPLTAVVEQIEDVFIGMGYEVAEGTEVEKDYYNFEALNLPKDHPARDMQDTFYITEETLLRTHTSSVQARTMEKNKEKGPIKIICPGKVYRRDDDDATHSHQFMQIEGLVIDKNIRMSDLKGTLQVFVKKMFGEDREIRLRPSFFPFTEPSVEMDISCMMCHGKGCGTCKGTGWIEILGAGMVHPNVLEMAGYDSKEYQGFAFGMGAERIAMLKYGVDDIRHFYTNDVRFLQQFKRA.

E256 lines the Mg(2+) pocket.

This sequence belongs to the class-II aminoacyl-tRNA synthetase family. Phe-tRNA synthetase alpha subunit type 1 subfamily. Tetramer of two alpha and two beta subunits. The cofactor is Mg(2+).

It localises to the cytoplasm. The enzyme catalyses tRNA(Phe) + L-phenylalanine + ATP = L-phenylalanyl-tRNA(Phe) + AMP + diphosphate + H(+). The sequence is that of Phenylalanine--tRNA ligase alpha subunit from Bacillus mycoides (strain KBAB4) (Bacillus weihenstephanensis).